A 630-amino-acid polypeptide reads, in one-letter code: Putative lipase atg15 (630 aa).

Over 1–20 the chain is Cytoplasmic; it reads MKSSQRRIKRHAMRDMSIST. The helical; Signal-anchor for type II membrane protein transmembrane segment at 21-40 threads the bilayer; sequence LLLSVVLLPSVVSANDHVYF. Residues 41–630 are Lumenal-facing; that stretch reads NPPSPGSPFL…WGSDIEHYEI (590 aa). N-linked (GlcNAc...) asparagine glycosylation is found at N200, N222, N280, and N304. S320 functions as the Charge relay system in the catalytic mechanism. N466 is a glycosylation site (N-linked (GlcNAc...) asparagine). The segment covering 577–589 has biased composition (polar residues); sequence SVTAPPFSTSTSS. Residues 577–599 form a disordered region; that stretch reads SVTAPPFSTSTSSDHVRADHSIG.

Belongs to the AB hydrolase superfamily. Lipase family. As to quaternary structure, binds to both phosphatidylinositol (PI) and phosphatidylinositol 3,5-bisphosphate (PIP2).

It localises to the endosome. The protein localises to the multivesicular body membrane. The protein resides in the prevacuolar compartment membrane. It catalyses the reaction a triacylglycerol + H2O = a diacylglycerol + a fatty acid + H(+). Lipase which is essential for lysis of subvacuolar cytoplasm to vacuole targeted bodies and intravacuolar autophagic bodies. Involved in the lysis of intravacuolar multivesicular body (MVB) vesicles. The intravacuolar membrane disintegration by atg15 is critical to life span extension. The sequence is that of Putative lipase atg15 (atg15) from Aspergillus clavatus (strain ATCC 1007 / CBS 513.65 / DSM 816 / NCTC 3887 / NRRL 1 / QM 1276 / 107).